A 155-amino-acid chain; its full sequence is Pathogenesis-related protein STH-21 (155 aa).

The protein belongs to the BetVI family.

The sequence is that of Pathogenesis-related protein STH-21 (STH-21) from Solanum tuberosum (Potato).